We begin with the raw amino-acid sequence, 140 residues long: Large-conductance mechanosensitive channel (140 aa).

3 helical membrane passes run 7 to 27 (EFAF…GAAF), 30 to 50 (IITS…FGTV), and 64 to 84 (GLFV…FLFV).

It belongs to the MscL family. As to quaternary structure, homopentamer.

It localises to the cell membrane. Its function is as follows. Channel that opens in response to stretch forces in the membrane lipid bilayer. May participate in the regulation of osmotic pressure changes within the cell. The polypeptide is Large-conductance mechanosensitive channel (Staphylococcus carnosus (strain TM300)).